The sequence spans 414 residues: Tryptophan synthase beta chain (414 aa).

The segment at 1-26 is disordered; it reads MVSTFSRQDQNYKNDDLNQPSKEGRF. Basic and acidic residues predominate over residues 10 to 26; sequence QNYKNDDLNQPSKEGRF. At lysine 109 the chain carries N6-(pyridoxal phosphate)lysine.

It belongs to the TrpB family. Tetramer of two alpha and two beta chains. The cofactor is pyridoxal 5'-phosphate.

The catalysed reaction is (1S,2R)-1-C-(indol-3-yl)glycerol 3-phosphate + L-serine = D-glyceraldehyde 3-phosphate + L-tryptophan + H2O. It participates in amino-acid biosynthesis; L-tryptophan biosynthesis; L-tryptophan from chorismate: step 5/5. The beta subunit is responsible for the synthesis of L-tryptophan from indole and L-serine. This is Tryptophan synthase beta chain from Prochlorococcus marinus (strain MIT 9312).